We begin with the raw amino-acid sequence, 630 residues long: Phosphatidylinositol 4-kinase gamma 5 (630 aa).

The Ubiquitin-like; degenerate domain maps to Arg-41–Arg-98. The 298-residue stretch at Gly-162–Pro-459 folds into the PI3K/PI4K catalytic domain. The interval Val-168–Gly-174 is G-loop. ATP contacts are provided by residues Asn-169 to Ala-175, Lys-190, and Gln-279 to Ile-282. The catalytic loop stretch occupies residues Leu-312 to Asn-320. The interval Pro-339–Ile-365 is activation loop. Asp-341 is an ATP binding site. The segment at Leu-500–Asp-527 is disordered. Residues Thr-506–Asp-524 are compositionally biased toward acidic residues. Position 571 is a phosphoserine (Ser-571).

Belongs to the PI3/PI4-kinase family. Type II PI4K subfamily. Interacts with AHK2.

It carries out the reaction a 1,2-diacyl-sn-glycero-3-phospho-(1D-myo-inositol) + ATP = a 1,2-diacyl-sn-glycero-3-phospho-(1D-myo-inositol 4-phosphate) + ADP + H(+). Its function is as follows. The phosphorylation of phosphatidylinositol (PI) to PI4P is the first committed step in the generation of phosphatidylinositol 4,5-bisphosphate (PIP2), a precursor of the second messenger inositol 1,4,5-trisphosphate (InsP3). This is Phosphatidylinositol 4-kinase gamma 5 (PI4KG5) from Arabidopsis thaliana (Mouse-ear cress).